Here is a 757-residue protein sequence, read N- to C-terminus: 5-methyltetrahydropteroyltriglutamate--homocysteine methyltransferase (757 aa).

5-methyltetrahydropteroyltri-L-glutamate-binding positions include Arg-16–Lys-19 and Lys-112. Residues Ile-433–Ser-435 and Glu-486 contribute to the L-homocysteine site. Residues Ile-433–Ser-435 and Glu-486 contribute to the L-methionine site. Residues Arg-517–Cys-518 and Trp-563 contribute to the 5-methyltetrahydropteroyltri-L-glutamate site. Asp-601 is an L-homocysteine binding site. Asp-601 is an L-methionine binding site. Glu-607 serves as a coordination point for 5-methyltetrahydropteroyltri-L-glutamate. His-643, Cys-645, and Glu-667 together coordinate Zn(2+). The active-site Proton donor is the His-696. Residue Cys-728 participates in Zn(2+) binding.

The protein belongs to the vitamin-B12 independent methionine synthase family. The cofactor is Zn(2+).

The enzyme catalyses 5-methyltetrahydropteroyltri-L-glutamate + L-homocysteine = tetrahydropteroyltri-L-glutamate + L-methionine. The protein operates within amino-acid biosynthesis; L-methionine biosynthesis via de novo pathway; L-methionine from L-homocysteine (MetE route): step 1/1. Functionally, catalyzes the transfer of a methyl group from 5-methyltetrahydrofolate to homocysteine resulting in methionine formation. The protein is 5-methyltetrahydropteroyltriglutamate--homocysteine methyltransferase of Pasteurella multocida (strain Pm70).